The primary structure comprises 409 residues: 4-hydroxy-3-methylbut-2-en-1-yl diphosphate synthase (flavodoxin) (409 aa).

[4Fe-4S] cluster contacts are provided by Cys-298, Cys-301, Cys-344, and Glu-351.

It belongs to the IspG family. The cofactor is [4Fe-4S] cluster.

It carries out the reaction (2E)-4-hydroxy-3-methylbut-2-enyl diphosphate + oxidized [flavodoxin] + H2O + 2 H(+) = 2-C-methyl-D-erythritol 2,4-cyclic diphosphate + reduced [flavodoxin]. It functions in the pathway isoprenoid biosynthesis; isopentenyl diphosphate biosynthesis via DXP pathway; isopentenyl diphosphate from 1-deoxy-D-xylulose 5-phosphate: step 5/6. Functionally, converts 2C-methyl-D-erythritol 2,4-cyclodiphosphate (ME-2,4cPP) into 1-hydroxy-2-methyl-2-(E)-butenyl 4-diphosphate. The sequence is that of 4-hydroxy-3-methylbut-2-en-1-yl diphosphate synthase (flavodoxin) from Dechloromonas aromatica (strain RCB).